The following is a 102-amino-acid chain: Aspartyl/glutamyl-tRNA(Asn/Gln) amidotransferase subunit C (102 aa).

It belongs to the GatC family. Heterotrimer of A, B and C subunits.

It carries out the reaction L-glutamyl-tRNA(Gln) + L-glutamine + ATP + H2O = L-glutaminyl-tRNA(Gln) + L-glutamate + ADP + phosphate + H(+). The enzyme catalyses L-aspartyl-tRNA(Asn) + L-glutamine + ATP + H2O = L-asparaginyl-tRNA(Asn) + L-glutamate + ADP + phosphate + 2 H(+). Allows the formation of correctly charged Asn-tRNA(Asn) or Gln-tRNA(Gln) through the transamidation of misacylated Asp-tRNA(Asn) or Glu-tRNA(Gln) in organisms which lack either or both of asparaginyl-tRNA or glutaminyl-tRNA synthetases. The reaction takes place in the presence of glutamine and ATP through an activated phospho-Asp-tRNA(Asn) or phospho-Glu-tRNA(Gln). The polypeptide is Aspartyl/glutamyl-tRNA(Asn/Gln) amidotransferase subunit C (Leuconostoc citreum (strain KM20)).